The primary structure comprises 673 residues: DNA ligase (673 aa).

Residues 34–38 (DAEYD), 83–84 (SL), and Glu-116 contribute to the NAD(+) site. The active-site N6-AMP-lysine intermediate is the Lys-118. NAD(+) is bound by residues Arg-139, Glu-176, Lys-293, and Lys-317. Residues Cys-411, Cys-414, Cys-429, and Cys-435 each contribute to the Zn(2+) site. Positions 595–673 (NQQNPFFGKT…EDEFLKWVNS (79 aa)) constitute a BRCT domain.

This sequence belongs to the NAD-dependent DNA ligase family. LigA subfamily. The cofactor is Mg(2+). Mn(2+) is required as a cofactor.

The enzyme catalyses NAD(+) + (deoxyribonucleotide)n-3'-hydroxyl + 5'-phospho-(deoxyribonucleotide)m = (deoxyribonucleotide)n+m + AMP + beta-nicotinamide D-nucleotide.. DNA ligase that catalyzes the formation of phosphodiester linkages between 5'-phosphoryl and 3'-hydroxyl groups in double-stranded DNA using NAD as a coenzyme and as the energy source for the reaction. It is essential for DNA replication and repair of damaged DNA. The sequence is that of DNA ligase from Legionella pneumophila (strain Corby).